A 149-amino-acid polypeptide reads, in one-letter code: D-aminoacyl-tRNA deacylase (149 aa).

Positions 137 to 138 (GP) match the Gly-cisPro motif, important for rejection of L-amino acids motif.

This sequence belongs to the DTD family. Homodimer.

It is found in the cytoplasm. The enzyme catalyses glycyl-tRNA(Ala) + H2O = tRNA(Ala) + glycine + H(+). It carries out the reaction a D-aminoacyl-tRNA + H2O = a tRNA + a D-alpha-amino acid + H(+). Functionally, an aminoacyl-tRNA editing enzyme that deacylates mischarged D-aminoacyl-tRNAs. Also deacylates mischarged glycyl-tRNA(Ala), protecting cells against glycine mischarging by AlaRS. Acts via tRNA-based rather than protein-based catalysis; rejects L-amino acids rather than detecting D-amino acids in the active site. By recycling D-aminoacyl-tRNA to D-amino acids and free tRNA molecules, this enzyme counteracts the toxicity associated with the formation of D-aminoacyl-tRNA entities in vivo and helps enforce protein L-homochirality. This Clostridium botulinum (strain 657 / Type Ba4) protein is D-aminoacyl-tRNA deacylase.